Here is a 110-residue protein sequence, read N- to C-terminus: Large ribosomal subunit protein uL22 (110 aa).

The protein belongs to the universal ribosomal protein uL22 family. Part of the 50S ribosomal subunit.

In terms of biological role, this protein binds specifically to 23S rRNA; its binding is stimulated by other ribosomal proteins, e.g. L4, L17, and L20. It is important during the early stages of 50S assembly. It makes multiple contacts with different domains of the 23S rRNA in the assembled 50S subunit and ribosome. Functionally, the globular domain of the protein is located near the polypeptide exit tunnel on the outside of the subunit, while an extended beta-hairpin is found that lines the wall of the exit tunnel in the center of the 70S ribosome. In Leptospira borgpetersenii serovar Hardjo-bovis (strain JB197), this protein is Large ribosomal subunit protein uL22.